A 516-amino-acid chain; its full sequence is Histone H4 transcription factor (516 aa).

C2H2-type zinc fingers lie at residues 15–39 (LQCE…VTQH), 127–151 (FLCL…VEAH), and 167–191 (VLCG…LRSH). Residues 197–219 (VACPTCGGMFANNTKFLDHIRRQ) form a C2H2-type 4; degenerate zinc finger. 5 consecutive C2H2-type zinc fingers follow at residues 227–249 (FQCS…MRNH), 253–276 (YKCP…RFRH), 282–304 (FKCD…LDTH), 310–335 (YSCD…RKVH), and 343–366 (YRCH…RKKH). An interaction with NPAT region spans residues 371–516 (PSGHPRFRYK…AAEEPEVQMV (146 aa)). Positions 372-405 (SGHPRFRYKEHEDGYMRLQLVRYESVELTQQLLR) are required for activation of histone H4 transcription and contributes to DNA-binding. Disordered stretches follow at residues 429–456 (TVPG…PASQ) and 486–516 (PGEP…VQMV). Positions 436-445 (PQEEAEEEGG) are enriched in acidic residues.

In terms of assembly, binds MBD2 and a histone deacetylase complex. Interacts with NPAT. In terms of processing, ubiquitinated. Ubiquitination may lead to proteasome-mediated degradation.

The protein resides in the nucleus. Its function is as follows. Transcriptional repressor that binds to the consensus sequence 5'-CGGACGTT-3' and to the RB1 promoter. Transcriptional activator that promotes histone H4 gene transcription at the G1/S phase transition in conjunction with NPAT. Also activates transcription of the ATM and PRKDC genes. Autoregulates its expression by associating with its own promoter. The protein is Histone H4 transcription factor (HINFP) of Bos taurus (Bovine).